The sequence spans 225 residues: tRNA (guanine-N(1)-)-methyltransferase (225 aa).

S-adenosyl-L-methionine is bound by residues Gly-112 and 132 to 137 (IGDYVL).

Belongs to the RNA methyltransferase TrmD family. In terms of assembly, homodimer.

The protein resides in the cytoplasm. It carries out the reaction guanosine(37) in tRNA + S-adenosyl-L-methionine = N(1)-methylguanosine(37) in tRNA + S-adenosyl-L-homocysteine + H(+). In terms of biological role, specifically methylates guanosine-37 in various tRNAs. In Bacteroides fragilis (strain ATCC 25285 / DSM 2151 / CCUG 4856 / JCM 11019 / LMG 10263 / NCTC 9343 / Onslow / VPI 2553 / EN-2), this protein is tRNA (guanine-N(1)-)-methyltransferase.